Here is a 319-residue protein sequence, read N- to C-terminus: MKKSLTSLDLNLLLCLQLLMQERSVTKAAKRMNVTPSAVSKSLAKLRAWFDDPLFVNTPLGLAPTPLMVSMEQSLADWMQMGNQLLDKPHHQTPRGLKFELAAESPLMMIMFNSLSQQIYQRYPQATIKVRNWDYDSLEAITRGEVDIGFTGRESHPRSRELLSLLPLAIDFEVLFSDLPWVWLREDHPALREAWDLDTFLRYPHISICWEQSDTWALDDVLQEMGRKRHIALSLPGFEQSLFMAAQPGHTLIATAPRYCQHYNQLHQLPLVARPLPFDAQQREKLMVPFTLLWHKRNSHNPKIVWLRQAINTLCRRLI.

An HTH lysR-type domain is found at 8–65 (LDLNLLLCLQLLMQERSVTKAAKRMNVTPSAVSKSLAKLRAWFDDPLFVNTPLGLAPT). A DNA-binding region (H-T-H motif) is located at residues 25–44 (VTKAAKRMNVTPSAVSKSLA).

Belongs to the LysR transcriptional regulatory family.

In terms of biological role, involved in anaerobic NO protection. This is HTH-type transcriptional regulator YidZ from Salmonella heidelberg (strain SL476).